Here is a 206-residue protein sequence, read N- to C-terminus: Protein GrpE (206 aa).

The segment at 1–64 (MSKKASMHKE…KALEEAQQQA (64 aa)) is disordered. Over residues 46 to 58 (SDAKVQELEKALE) the composition is skewed to basic and acidic residues.

Belongs to the GrpE family. As to quaternary structure, homodimer.

The protein localises to the cytoplasm. Functionally, participates actively in the response to hyperosmotic and heat shock by preventing the aggregation of stress-denatured proteins, in association with DnaK and GrpE. It is the nucleotide exchange factor for DnaK and may function as a thermosensor. Unfolded proteins bind initially to DnaJ; upon interaction with the DnaJ-bound protein, DnaK hydrolyzes its bound ATP, resulting in the formation of a stable complex. GrpE releases ADP from DnaK; ATP binding to DnaK triggers the release of the substrate protein, thus completing the reaction cycle. Several rounds of ATP-dependent interactions between DnaJ, DnaK and GrpE are required for fully efficient folding. This Prosthecochloris aestuarii (strain DSM 271 / SK 413) protein is Protein GrpE.